Reading from the N-terminus, the 59-residue chain is Ribosome biogenesis protein Nop10 (59 aa).

Belongs to the NOP10 family.

In terms of biological role, involved in ribosome biogenesis; more specifically in 18S rRNA pseudouridylation and in cleavage of pre-rRNA. This Thermococcus kodakarensis (strain ATCC BAA-918 / JCM 12380 / KOD1) (Pyrococcus kodakaraensis (strain KOD1)) protein is Ribosome biogenesis protein Nop10.